A 360-amino-acid chain; its full sequence is Cell division protein DivIB (360 aa).

Residues 1-54 (MTEKDSNVEESVLEVEQASQVELDSEQISPAEKESVLAEEKEFSTDVDIPEMTA) are disordered. At 1–139 (MTEKDSNVEE…VDIPSKVVWK (139 aa)) the chain is on the cytoplasmic side. Residues 17–28 (QASQVELDSEQI) show a composition bias toward polar residues. The span at 31 to 44 (AEKESVLAEEKEFS) shows a compositional bias: basic and acidic residues. Residues 140–160 (AIPVLVTSLLLAALALYFISP) traverse the membrane as a helical segment. Residues 161–360 (TSKKKQIEVV…MEVGIYRYAS (200 aa)) are Extracellular-facing. The POTRA domain occupies 162–233 (SKKKQIEVVG…ATFTIHIKEY (72 aa)).

It belongs to the FtsQ/DivIB family. DivIB subfamily.

Its subcellular location is the cell membrane. Cell division protein that may be involved in stabilizing or promoting the assembly of the division complex. The protein is Cell division protein DivIB of Streptococcus suis (strain GZ1).